The sequence spans 578 residues: Leucine-rich repeat-containing protein 15 (578 aa).

The signal sequence occupies residues 1-21 (MPLKHYLLLLVGCQAWALGLA). An LRRNT domain is found at 22-53 (YYGCPSECTCSRASQVECTGARIVAMPTPLPW). Topologically, residues 22–535 (YYGCPSECTC…TWGMTEAQSG (514 aa)) are extracellular. LRR repeat units lie at residues 54-75 (NAMS…LFLN), 78-99 (ALIA…AFRN), 102-123 (SLRY…VFQD), 126-147 (NLES…QFSQ), 150-171 (NLRE…AFDH), 174-195 (GLTK…LFQH), 198-219 (NLQV…TFDA), 222-243 (NLQE…LFHN), 246-267 (NLQR…IFMQ), 270-291 (QLNK…VFGP), 294-315 (NLRE…TFSH), 318-339 (QLQV…AFNG), 342-363 (NLRE…VFRS), 366-387 (NLQN…IFAN), and 390-411 (GLTT…IFDH). N-linked (GlcNAc...) asparagine glycosylation occurs at asparagine 75. The N-linked (GlcNAc...) asparagine glycan is linked to asparagine 369. An LRRCT domain is found at 423–473 (NPWRCDSDILPLHNWLLLNRARLGTDTLPVCSSPANVRGQSLVIININFPG). A disordered region spans residues 476–500 (VQGPETPEVPSYPDTPSYPDTTSVS). The chain crosses the membrane as a helical span at residues 536–556 (LAIAAIVIGIIALACSLAACI). Residues 557–578 (CCCCCKKRSQAVLMQMKAPNEC) are Cytoplasmic-facing.

It is found in the cell membrane. This Rattus norvegicus (Rat) protein is Leucine-rich repeat-containing protein 15 (Lrrc15).